The sequence spans 122 residues: Large ribosomal subunit protein bL12 (122 aa).

This sequence belongs to the bacterial ribosomal protein bL12 family. As to quaternary structure, homodimer. Part of the ribosomal stalk of the 50S ribosomal subunit. Forms a multimeric L10(L12)X complex, where L10 forms an elongated spine to which 2 to 4 L12 dimers bind in a sequential fashion. Binds GTP-bound translation factors.

Its function is as follows. Forms part of the ribosomal stalk which helps the ribosome interact with GTP-bound translation factors. Is thus essential for accurate translation. The protein is Large ribosomal subunit protein bL12 of Stenotrophomonas maltophilia (strain K279a).